The sequence spans 411 residues: Na(+)-translocating NADH-quinone reductase subunit F (411 aa).

The helical transmembrane segment at 5-25 (VILALGIAAFTVIVLVLVAII) threads the bilayer. Positions 36 to 130 (GDITIDINDD…NMEVELPEEI (95 aa)) constitute a 2Fe-2S ferredoxin-type domain. Residues Cys-73, Cys-79, Cys-82, and Cys-114 each contribute to the [2Fe-2S] cluster site. Residues 133–273 (VKKWECTVIS…SGPFGEFFAK (141 aa)) enclose the FAD-binding FR-type domain.

The protein belongs to the NqrF family. In terms of assembly, composed of six subunits; NqrA, NqrB, NqrC, NqrD, NqrE and NqrF. The cofactor is [2Fe-2S] cluster. Requires FAD as cofactor.

The protein resides in the cell inner membrane. The catalysed reaction is a ubiquinone + n Na(+)(in) + NADH + H(+) = a ubiquinol + n Na(+)(out) + NAD(+). Its function is as follows. NQR complex catalyzes the reduction of ubiquinone-1 to ubiquinol by two successive reactions, coupled with the transport of Na(+) ions from the cytoplasm to the periplasm. The first step is catalyzed by NqrF, which accepts electrons from NADH and reduces ubiquinone-1 to ubisemiquinone by a one-electron transfer pathway. The protein is Na(+)-translocating NADH-quinone reductase subunit F of Haemophilus influenzae (strain 86-028NP).